The chain runs to 665 residues: Pre-mRNA-processing factor 39 (665 aa).

Basic and acidic residues predominate over residues 1–11 (MQNSHMEEYRN). The interval 1-28 (MQNSHMEEYRNSDNGSTGNSSEVAVVEH) is disordered. Polar residues predominate over residues 12 to 22 (SDNGSTGNSSE). Residue serine 44 is modified to Phosphoserine. 7 HAT repeats span residues 107–139 (NHLMAARKAFDKFFVHYPYCYGYWKKYADLEKR), 141–173 (DNIKQSDEVYRRGLQAIPLSVDLWIHYINFLKE), 181–216 (ETNTTIRGTFEHAVLAAGTDFRSDKLWEMYINWENE), 218–251 (GNLREVTAVYDRILGIPTQLYSHHFQRFKEHVQN), 331–363 (FEEGIKRPYFHVKPLEKAQPKKNWKEYLEFEIE), 365–397 (GTHERVVVLFERCVISCALYEEFWIKYAKYMEN), and 402–434 (GVRHVFSRACTVHLPKKPMAHMLWAAFEEQQGN). Residues 599–622 (QDTLKRKAENGSEEPEEKKAHTED) show a composition bias toward basic and acidic residues. Residues 599–625 (QDTLKRKAENGSEEPEEKKAHTEDLSS) are disordered.

It belongs to the PRP39 family.

Its subcellular location is the nucleus. Involved in pre-mRNA splicing. The sequence is that of Pre-mRNA-processing factor 39 (Prpf39) from Mus musculus (Mouse).